We begin with the raw amino-acid sequence, 337 residues long: Protein XAP5 CIRCADIAN TIMEKEEPER (337 aa).

Ser2 carries the N-acetylserine modification. Coiled coils occupy residues 13–41 and 72–121; these read QDAV…KSAS and TREE…GSSR. Residues 23-37 are compositionally biased toward basic and acidic residues; the sequence is KQREAERKKIQELKS. Residues 23–47 are disordered; the sequence is KQREAERKKIQELKSKSASGNDQSG. Residues 38–47 are compositionally biased toward polar residues; that stretch reads KSASGNDQSG. The tract at residues 125–174 is disordered; it reads AEDFENGSDEDDGENKSSGTGNLRCGKLGKDPSVETNFLPDSEREAEEQA. A compositionally biased stretch (acidic residues) spans 126–137; that stretch reads EDFENGSDEDDG. Phosphoserine is present on Ser132. Over residues 165–174 the composition is skewed to basic and acidic residues; it reads DSEREAEEQA.

This sequence belongs to the FAM50 family. In terms of tissue distribution, expressed in leaves stems, flowers, roots, trichomes and hypocotyls.

Its subcellular location is the nucleus. In terms of biological role, involved in light regulation of the circadian clock and photomorphogenesis. May play a global role in coordinating growth in response to the light environment. Acts as a light quality sensor directing both negative and positive transcriptional regulation. Inhibits growth in red light but promote growth in blue light. Inhibits clock gene expression in diurnal cycles. Plays no role in the control of flowering time. This Arabidopsis thaliana (Mouse-ear cress) protein is Protein XAP5 CIRCADIAN TIMEKEEPER (XCT).